The primary structure comprises 93 residues: MGESQPVKTFDALFDELTERARTRPEGSGTVAALDGGVHGLGKKILEEAGEVWLAAEHESDEALAEEISQLLYWTQVLMIARGLSPDDVYRKL.

The protein belongs to the PRA-PH family.

The protein resides in the cytoplasm. It catalyses the reaction 1-(5-phospho-beta-D-ribosyl)-ATP + H2O = 1-(5-phospho-beta-D-ribosyl)-5'-AMP + diphosphate + H(+). The protein operates within amino-acid biosynthesis; L-histidine biosynthesis; L-histidine from 5-phospho-alpha-D-ribose 1-diphosphate: step 2/9. This chain is Phosphoribosyl-ATP pyrophosphatase, found in Mycobacterium sp. (strain JLS).